A 435-amino-acid chain; its full sequence is Zinc finger and BTB domain-containing protein 25 (435 aa).

Residues 1–107 form the BTB domain; it reads MDTASHSLVL…GIRFLHADYL (107 aa). Glycyl lysine isopeptide (Lys-Gly) (interchain with G-Cter in SUMO2) cross-links involve residues K142, K148, K198, and K204. The segment at 238–260 adopts a C2H2-type 1 zinc-finger fold; the sequence is HLCHYCGERFDSRSNLRQHLHTH. Residues K303 and K330 each participate in a glycyl lysine isopeptide (Lys-Gly) (interchain with G-Cter in SUMO2) cross-link. A C2H2-type 2 zinc finger spans residues 349–371; that stretch reads MSCTICGHKFPRKSQLLEHMYTH. Residue K405 forms a Glycyl lysine isopeptide (Lys-Gly) (interchain with G-Cter in SUMO2) linkage.

Expressed mainly in hematopoietic cells and testis.

The protein localises to the nucleus. Functionally, may be involved in transcriptional regulation. The polypeptide is Zinc finger and BTB domain-containing protein 25 (ZBTB25) (Homo sapiens (Human)).